A 96-amino-acid polypeptide reads, in one-letter code: Small ribosomal subunit protein bS6 (96 aa).

Belongs to the bacterial ribosomal protein bS6 family.

Functionally, binds together with bS18 to 16S ribosomal RNA. The sequence is that of Small ribosomal subunit protein bS6 from Mycobacteroides abscessus (strain ATCC 19977 / DSM 44196 / CCUG 20993 / CIP 104536 / JCM 13569 / NCTC 13031 / TMC 1543 / L948) (Mycobacterium abscessus).